The chain runs to 389 residues: Methionyl-tRNA formyltransferase, mitochondrial (389 aa).

This sequence belongs to the Fmt family.

Its subcellular location is the mitochondrion. It catalyses the reaction L-methionyl-tRNA(fMet) + (6R)-10-formyltetrahydrofolate = N-formyl-L-methionyl-tRNA(fMet) + (6S)-5,6,7,8-tetrahydrofolate + H(+). Methionyl-tRNA formyltransferase that formylates methionyl-tRNA in mitochondria and is crucial for translation initiation. The sequence is that of Methionyl-tRNA formyltransferase, mitochondrial (MTFMT) from Homo sapiens (Human).